A 1184-amino-acid polypeptide reads, in one-letter code: DNA-directed RNA polymerase subunit beta (1184 aa).

A disordered region spans residues 1160–1184 (DDDFTNQNDAFNIVQPENAAAEKTE).

The protein belongs to the RNA polymerase beta chain family. In terms of assembly, the RNAP catalytic core consists of 2 alpha, 1 beta, 1 beta' and 1 omega subunit. When a sigma factor is associated with the core the holoenzyme is formed, which can initiate transcription.

The enzyme catalyses RNA(n) + a ribonucleoside 5'-triphosphate = RNA(n+1) + diphosphate. Functionally, DNA-dependent RNA polymerase catalyzes the transcription of DNA into RNA using the four ribonucleoside triphosphates as substrates. In Listeria monocytogenes serotype 4b (strain F2365), this protein is DNA-directed RNA polymerase subunit beta.